Reading from the N-terminus, the 173-residue chain is Photosystem I reaction center subunit XI (173 aa).

The next 2 membrane-spanning stretches (helical) occupy residues 92–112 and 148–168; these read LAGL…LSLY and LIGG…LGII.

This sequence belongs to the PsaL family.

Its subcellular location is the cellular thylakoid membrane. The sequence is that of Photosystem I reaction center subunit XI from Nostoc punctiforme (strain ATCC 29133 / PCC 73102).